The following is a 432-amino-acid chain: Adenylosuccinate synthetase (432 aa).

GTP-binding positions include Gly-13 to Lys-19 and Gly-41 to Thr-43. Catalysis depends on Asp-14, which acts as the Proton acceptor. Mg(2+) is bound by residues Asp-14 and Gly-41. IMP-binding positions include Asp-14–Lys-17, Asn-39–His-42, Thr-130, Arg-144, Gln-225, Thr-240, and Arg-304. Catalysis depends on His-42, which acts as the Proton donor. Ala-300–Arg-306 contributes to the substrate binding site. GTP is bound by residues Arg-306, Lys-332–Asp-334, and Ser-415–Gly-417.

This sequence belongs to the adenylosuccinate synthetase family. In terms of assembly, homodimer. It depends on Mg(2+) as a cofactor.

The protein localises to the cytoplasm. It carries out the reaction IMP + L-aspartate + GTP = N(6)-(1,2-dicarboxyethyl)-AMP + GDP + phosphate + 2 H(+). Its pathway is purine metabolism; AMP biosynthesis via de novo pathway; AMP from IMP: step 1/2. Plays an important role in the de novo pathway of purine nucleotide biosynthesis. Catalyzes the first committed step in the biosynthesis of AMP from IMP. This chain is Adenylosuccinate synthetase, found in Hahella chejuensis (strain KCTC 2396).